The primary structure comprises 386 residues: MNIHEYQGKEILKQYGVKVPEGRVAFTVEEAVEAAKELGTQVNVVKAQIHAGGRGKAGGVKVAKNLDEVRTYASEILGKVLVTHQTGPEGKEVKRLLIEQGCDIKKEYYVGVVVDRATGSVVMMASEEGGMDIEEVAANNPEKIFKEVVDPVTGLNGFQARRLAYAINIPKELINKAAKFMMSLYQAFVDKDASIAEINPLVVTGDGEVMALDAKLNFDSNALYRHPDIVALRDLDEEDEKEIEASKFDLSYIALDGNIGCMVNGAGLAMATMDIVKFYGGDPANFLDVGGGATEEKVTEAFKIILRDEKVKGIFVNIFGGIMKCDVIANGVVNAAKQIKLDKPLVVRLEGTNVDLGKKILNESGLNIVAAESMADGAEKIVSLVK.

Residues 9 to 244 enclose the ATP-grasp domain; sequence KEILKQYGVK…LDEEDEKEIE (236 aa). ATP is bound by residues Lys-46, 53–55, Glu-99, Cys-102, and Glu-107; that span reads GRG. Residues Asn-199 and Asp-213 each coordinate Mg(2+). Residues Asn-264 and 321–323 contribute to the substrate site; that span reads GIM.

This sequence belongs to the succinate/malate CoA ligase beta subunit family. In terms of assembly, heterotetramer of two alpha and two beta subunits. The cofactor is Mg(2+).

The catalysed reaction is succinate + ATP + CoA = succinyl-CoA + ADP + phosphate. The enzyme catalyses GTP + succinate + CoA = succinyl-CoA + GDP + phosphate. Its pathway is carbohydrate metabolism; tricarboxylic acid cycle; succinate from succinyl-CoA (ligase route): step 1/1. Functionally, succinyl-CoA synthetase functions in the citric acid cycle (TCA), coupling the hydrolysis of succinyl-CoA to the synthesis of either ATP or GTP and thus represents the only step of substrate-level phosphorylation in the TCA. The beta subunit provides nucleotide specificity of the enzyme and binds the substrate succinate, while the binding sites for coenzyme A and phosphate are found in the alpha subunit. This is Succinate--CoA ligase [ADP-forming] subunit beta from Brevibacillus brevis (strain 47 / JCM 6285 / NBRC 100599).